We begin with the raw amino-acid sequence, 361 residues long: Beta-hexosaminidase (361 aa).

Residues aspartate 69, arginine 77, arginine 144, and 174-175 each bind substrate; that span reads KH. The Proton donor/acceptor role is filled by histidine 187. Aspartate 258 functions as the Nucleophile in the catalytic mechanism.

This sequence belongs to the glycosyl hydrolase 3 family. NagZ subfamily.

It localises to the cytoplasm. It catalyses the reaction Hydrolysis of terminal non-reducing N-acetyl-D-hexosamine residues in N-acetyl-beta-D-hexosaminides.. It functions in the pathway cell wall biogenesis; peptidoglycan recycling. Its function is as follows. Plays a role in peptidoglycan recycling by cleaving the terminal beta-1,4-linked N-acetylglucosamine (GlcNAc) from peptide-linked peptidoglycan fragments, giving rise to free GlcNAc, anhydro-N-acetylmuramic acid and anhydro-N-acetylmuramic acid-linked peptides. In Neisseria meningitidis serogroup A / serotype 4A (strain DSM 15465 / Z2491), this protein is Beta-hexosaminidase.